We begin with the raw amino-acid sequence, 359 residues long: 3-dehydroquinate synthase (359 aa).

This sequence belongs to the archaeal-type DHQ synthase family.

It carries out the reaction 2-amino-2,3,7-trideoxy-D-lyxo-hept-6-ulosonate + NAD(+) + H2O = 3-dehydroquinate + NH4(+) + NADH + H(+). Functionally, catalyzes the oxidative deamination and cyclization of 2-amino-3,7-dideoxy-D-threo-hept-6-ulosonic acid (ADH) to yield 3-dehydroquinate (DHQ), which is fed into the canonical shikimic pathway of aromatic amino acid biosynthesis. The sequence is that of 3-dehydroquinate synthase from Methanosphaera stadtmanae (strain ATCC 43021 / DSM 3091 / JCM 11832 / MCB-3).